The sequence spans 346 residues: Ferredoxin--NADP reductase 1 (346 aa).

Positions 37, 45, 49, 89, 124, 287, and 328 each coordinate FAD.

The protein belongs to the ferredoxin--NADP reductase type 2 family. In terms of assembly, homodimer. Requires FAD as cofactor.

It carries out the reaction 2 reduced [2Fe-2S]-[ferredoxin] + NADP(+) + H(+) = 2 oxidized [2Fe-2S]-[ferredoxin] + NADPH. In Bacillus pumilus (strain SAFR-032), this protein is Ferredoxin--NADP reductase 1.